The following is a 110-amino-acid chain: Insulin growth factor-like family member 1 (110 aa).

An N-terminal signal peptide occupies residues 1–24 (MAPRGCIVAVFAIFCISRLLCSHG). A glycan (N-linked (GlcNAc...) asparagine) is linked at asparagine 71.

The protein belongs to the IGFL family. In terms of assembly, homodimer; disulfide-linked. Detected in ovary and spinal cord.

The protein localises to the secreted. Functionally, probable ligand of the IGFLR1 cell membrane receptor. The protein is Insulin growth factor-like family member 1 (IGFL1) of Homo sapiens (Human).